The sequence spans 809 residues: TLR4 interactor with leucine rich repeats (809 aa).

Residues 1 to 25 form the signal peptide; that stretch reads MEGVGAVRFWLVVCGCLAFPPRAES. The 32-residue stretch at 26 to 57 folds into the LRRNT domain; that stretch reads VCPERCDCQHPQHLLCTNRGLRAVPKTSSLPS. The Extracellular segment spans residues 26-694; it reads VCPERCDCQH…AGGRGGVDYQ (669 aa). LRR repeat units follow at residues 61 to 81, 84 to 105, 108 to 129, 132 to 153, 156 to 177, 180 to 201, 204 to 223, 230 to 251, 254 to 275, 278 to 298, 302 to 323, and 326 to 347; these read VLTY…DFHR, QLRR…TFEK, RLEE…TLAP, KLRI…SFEG, SLVK…VFAP, NLLY…AFSQ, KLRF…RHAA, SLST…VFQH, RLGL…AFWG, ALRE…TLLE, SLEA…TFGH, and RLRE…IFAA. The N-linked (GlcNAc...) asparagine glycan is linked to N73. The 58-residue stretch at 359-416 folds into the LRRCT domain; the sequence is NGWTCDCRLRGLKRWMGNWHSQGRLLTVFVQCRHPPALRGKYLDYLDDQLLQNGSCVD. N411 carries an N-linked (GlcNAc...) asparagine glycan. Disordered stretches follow at residues 412–462 and 483–563; these read GSCV…RGRL and RLSR…SAVQ. Polar residues predominate over residues 421 to 436; the sequence is PTAGSRQWPLPTSSEE. The span at 488–506 shows a compositional bias: low complexity; it reads GPGPHQGPSAAAPGSAPQS. Polar residues predominate over residues 521-543; sequence ANLSQTEPTPTSEPASGTPSARD. Residues 554–563 show a composition bias toward low complexity; that stretch reads ASEQQESAVQ. A glycan (N-linked (GlcNAc...) asparagine) is linked at N587. The chain crosses the membrane as a helical span at residues 695–715; that stretch reads LLTLVLLAVNALLVLLALAAW. Residues 716–809 are Cytoplasmic-facing; that stretch reads GSRWLRRKLR…EDHLLQRFAD (94 aa). Residue S796 is modified to Phosphoserine.

As to quaternary structure, belongs to the lipopolysaccharide (LPS) receptor, a multi-protein complex containing at least CD14, MD-2 and TLR4. Interacts with TLR4; this interaction is greatly enhanced by LPS stimulation. Interacts with LPS. Post-translationally, N-glycolysaled. As to expression, highly expressed in brain, spinal cord and lung.

It localises to the membrane. Its function is as follows. Component of the TLR4 signaling complex. Mediates the innate immune response to bacterial lipopolysaccharide (LPS) leading to cytokine secretion. The sequence is that of TLR4 interactor with leucine rich repeats (Tril) from Mus musculus (Mouse).